Consider the following 151-residue polypeptide: Large ribosomal subunit protein uL15 (151 aa).

Residues 1 to 58 (MTSISLDSLKPNKGARKRKTRKGRGIAAGQGASCGFGMRGQKSRSGRPTRPGFEGGQM) are disordered. Residues 13-24 (KGARKRKTRKGR) show a composition bias toward basic residues. Positions 26-38 (IAAGQGASCGFGM) are enriched in gly residues.

The protein belongs to the universal ribosomal protein uL15 family. In terms of assembly, part of the 50S ribosomal subunit.

Binds to the 23S rRNA. This Prochlorococcus marinus (strain SARG / CCMP1375 / SS120) protein is Large ribosomal subunit protein uL15.